The sequence spans 260 residues: Pyridoxine 5'-phosphate synthase (260 aa).

3-amino-2-oxopropyl phosphate is bound at residue asparagine 15. 17-18 (DH) is a 1-deoxy-D-xylulose 5-phosphate binding site. Position 26 (arginine 26) interacts with 3-amino-2-oxopropyl phosphate. The Proton acceptor role is filled by histidine 51. Arginine 53 and histidine 58 together coordinate 1-deoxy-D-xylulose 5-phosphate. Glutamate 78 functions as the Proton acceptor in the catalytic mechanism. Threonine 108 provides a ligand contact to 1-deoxy-D-xylulose 5-phosphate. Residue histidine 199 is the Proton donor of the active site. 3-amino-2-oxopropyl phosphate-binding positions include glycine 200 and 221–222 (GH).

It belongs to the PNP synthase family. Homooctamer; tetramer of dimers.

Its subcellular location is the cytoplasm. It carries out the reaction 3-amino-2-oxopropyl phosphate + 1-deoxy-D-xylulose 5-phosphate = pyridoxine 5'-phosphate + phosphate + 2 H2O + H(+). It functions in the pathway cofactor biosynthesis; pyridoxine 5'-phosphate biosynthesis; pyridoxine 5'-phosphate from D-erythrose 4-phosphate: step 5/5. In terms of biological role, catalyzes the complicated ring closure reaction between the two acyclic compounds 1-deoxy-D-xylulose-5-phosphate (DXP) and 3-amino-2-oxopropyl phosphate (1-amino-acetone-3-phosphate or AAP) to form pyridoxine 5'-phosphate (PNP) and inorganic phosphate. The polypeptide is Pyridoxine 5'-phosphate synthase (Cupriavidus necator (strain ATCC 17699 / DSM 428 / KCTC 22496 / NCIMB 10442 / H16 / Stanier 337) (Ralstonia eutropha)).